A 561-amino-acid polypeptide reads, in one-letter code: ATP-dependent rRNA helicase RRP3 (561 aa).

Composition is skewed to low complexity over residues 1–23 (MPKA…SSNS) and 30–45 (ASSP…PSTS). Positions 1–109 (MPKASASSAK…DEKKVATIAD (109 aa)) are disordered. The segment covering 100–109 (DEKKVATIAD) has biased composition (basic and acidic residues). The short motif at 114-142 (VEFSDLGVIPQIVEACTNMGFKHPTPIQV) is the Q motif element. The Helicase ATP-binding domain maps to 145 to 316 (IPEALQARDV…RASLKNPVRV (172 aa)). 158 to 165 (AQTGSGKT) is a binding site for ATP. Positions 264-267 (DEAD) match the DEAD box motif. One can recognise a Helicase C-terminal domain in the interval 339 to 487 (HKDTYLVHLA…EFPGGNDKEA (149 aa)). Positions 506 to 561 (LKDKGVGSAGGSGKRKRKMDGKYGDDMDRDDDQVQAGLPVSGNGRHQNQNRKKGRR) are disordered.

It belongs to the DEAD box helicase family. DDX47/RRP3 subfamily. As to quaternary structure, interacts with the SSU processome.

Its subcellular location is the nucleus. It catalyses the reaction ATP + H2O = ADP + phosphate + H(+). In terms of biological role, ATP-dependent rRNA helicase required for pre-ribosomal RNA processing. Involved in the maturation of the 35S-pre-rRNA and to its cleavage to mature 18S rRNA. The sequence is that of ATP-dependent rRNA helicase RRP3 from Mycosarcoma maydis (Corn smut fungus).